Here is a 130-residue protein sequence, read N- to C-terminus: Small ribosomal subunit protein uS9 (130 aa).

Belongs to the universal ribosomal protein uS9 family.

The sequence is that of Small ribosomal subunit protein uS9 from Brevibacillus brevis (strain 47 / JCM 6285 / NBRC 100599).